Reading from the N-terminus, the 481-residue chain is Zinc metalloproteinase/disintegrin (481 aa).

Residues 1-20 (MIQVLLVTICLAVFPYQGSS) form the signal peptide. Residues 21–190 (IILESGNVDD…KASQLYLTPE (170 aa)) constitute a propeptide that is removed on maturation. The Peptidase M12B domain occupies 197 to 392 (RHIELAIVVD…KKPQCILNAP (196 aa)). Positions 200 and 284 each coordinate Ca(2+). Cystine bridges form between C308–C387, C349–C371, and C351–C354. Residue H333 coordinates Zn(2+). E334 is a catalytic residue. H337 and H343 together coordinate Zn(2+). 2 residues coordinate Ca(2+): C387 and N390. Residues 393–410 (LRTDTVSTPISGNEFLEA) constitute a propeptide that is removed on maturation. One can recognise a Disintegrin domain in the interval 400–481 (TPISGNEFLE…ADCPRNGLYG (82 aa)). Disulfide bonds link C414–C429, C416–C424, C423–C446, C437–C443, C442–C467, and C455–C474. Positions 459 to 461 (RGD) match the Cell attachment site motif.

The protein belongs to the venom metalloproteinase (M12B) family. P-II subfamily. P-IIa sub-subfamily. Monomer. Requires Zn(2+) as cofactor. As to expression, expressed by the venom gland.

Its subcellular location is the secreted. Its function is as follows. Impairs hemostasis in the envenomed animal. In terms of biological role, inhibits platelet aggregation induced by ADP and collagen. Acts by inhibiting fibrinogen interaction with platelet receptors GPIIb/GPIIIa (ITGA2B/ITGB3). Has antitumor-growth activity. The chain is Zinc metalloproteinase/disintegrin from Protobothrops jerdonii (Jerdon's pitviper).